The primary structure comprises 324 residues: Beta-ketoacyl-[acyl-carrier-protein] synthase III (324 aa).

Active-site residues include Cys-112 and His-249. An ACP-binding region spans residues 250 to 254 (QANRR). The active site involves Asn-279.

It belongs to the thiolase-like superfamily. FabH family. As to quaternary structure, homodimer.

The protein localises to the cytoplasm. It catalyses the reaction malonyl-[ACP] + acetyl-CoA + H(+) = 3-oxobutanoyl-[ACP] + CO2 + CoA. It participates in lipid metabolism; fatty acid biosynthesis. Its function is as follows. Catalyzes the condensation reaction of fatty acid synthesis by the addition to an acyl acceptor of two carbons from malonyl-ACP. Catalyzes the first condensation reaction which initiates fatty acid synthesis and may therefore play a role in governing the total rate of fatty acid production. Possesses both acetoacetyl-ACP synthase and acetyl transacylase activities. Its substrate specificity determines the biosynthesis of branched-chain and/or straight-chain of fatty acids. This is Beta-ketoacyl-[acyl-carrier-protein] synthase III from Streptococcus pyogenes serotype M3 (strain ATCC BAA-595 / MGAS315).